A 550-amino-acid chain; its full sequence is CTP synthase (550 aa).

An amidoligase domain region spans residues 1 to 271 (MTRYIFITGG…DAEVLDVFGM (271 aa)). S13 provides a ligand contact to CTP. A UTP-binding site is contributed by S13. 14–19 (SLGKGL) serves as a coordination point for ATP. Residue Y54 coordinates L-glutamine. D71 serves as a coordination point for ATP. Residues D71 and E145 each contribute to the Mg(2+) site. Residues 152 to 154 (DIE), 192 to 197 (KTKPTQ), and K228 contribute to the CTP site. UTP is bound by residues 192-197 (KTKPTQ) and K228. The 253-residue stretch at 297–549 (TIAVVGKYTV…IAAAKEHGRL (253 aa)) folds into the Glutamine amidotransferase type-1 domain. Residue G361 participates in L-glutamine binding. Catalysis depends on C388, which acts as the Nucleophile; for glutamine hydrolysis. Residues 389–392 (FGMQ), E412, and R477 contribute to the L-glutamine site. Catalysis depends on residues H522 and E524.

The protein belongs to the CTP synthase family. In terms of assembly, homotetramer.

The catalysed reaction is UTP + L-glutamine + ATP + H2O = CTP + L-glutamate + ADP + phosphate + 2 H(+). It carries out the reaction L-glutamine + H2O = L-glutamate + NH4(+). The enzyme catalyses UTP + NH4(+) + ATP = CTP + ADP + phosphate + 2 H(+). It participates in pyrimidine metabolism; CTP biosynthesis via de novo pathway; CTP from UDP: step 2/2. With respect to regulation, allosterically activated by GTP, when glutamine is the substrate; GTP has no effect on the reaction when ammonia is the substrate. The allosteric effector GTP functions by stabilizing the protein conformation that binds the tetrahedral intermediate(s) formed during glutamine hydrolysis. Inhibited by the product CTP, via allosteric rather than competitive inhibition. In terms of biological role, catalyzes the ATP-dependent amination of UTP to CTP with either L-glutamine or ammonia as the source of nitrogen. Regulates intracellular CTP levels through interactions with the four ribonucleotide triphosphates. The chain is CTP synthase from Caulobacter vibrioides (strain ATCC 19089 / CIP 103742 / CB 15) (Caulobacter crescentus).